Here is a 423-residue protein sequence, read N- to C-terminus: Polyglutamylase complex subunit TTLL1 (423 aa).

The TTL domain occupies 1–367 (MAGRVKWVTD…NGEIPDCKWN (367 aa)). Residues Lys138, 144–145 (QG), 181–184 (SLYI), and 194–196 (KFD) contribute to the ATP site. Gln144 contacts a protein. Residue Arg220 coordinates L-glutamate. An ATP-binding site is contributed by 241–242 (TN). Lys259 provides a ligand contact to L-glutamate. The Mg(2+) site is built by Asp313, Glu326, and Asn328. Lys344 provides a ligand contact to L-glutamate. The segment at 390-423 (DGAERELRSRPGQPVGPRTGRSRDSGRNVLTTWK) is disordered.

Belongs to the tubulin polyglutamylase family. As to quaternary structure, part of the neuronal tubulin polyglutamylase complex which contains TPGS1, TPGS2, TTLL1, LRRC49 and NICN1. Interacts with PCM1, CSTPP1 and LRRC49. Mg(2+) serves as cofactor.

It is found in the cytoplasm. Its subcellular location is the cytoskeleton. It localises to the cilium basal body. The protein resides in the cilium axoneme. The protein localises to the cell projection. It is found in the cilium. Its subcellular location is the flagellum. It carries out the reaction (L-glutamyl)(n)-gamma-L-glutamyl-L-glutamyl-[protein] + L-glutamate + ATP = (L-glutamyl)(n+1)-gamma-L-glutamyl-L-glutamyl-[protein] + ADP + phosphate + H(+). Functionally, catalytic subunit of a polyglutamylase complex which modifies tubulin, generating side chains of glutamate on the gamma-carboxyl group of specific glutamate residues within the C-terminal tail of tubulin. Probably involved in the side-chain elongation step of the polyglutamylation reaction rather than the initiation step. Modifies both alpha- and beta-tubulins with a preference for the alpha-tail. Unlike most polyglutamylases of the tubulin--tyrosine ligase family, only displays a catalytic activity when in complex with other proteins as it is most likely lacking domains important for autonomous activity. Part of the neuronal tubulin polyglutamylase complex. Mediates cilia and flagella polyglutamylation which is essential for their biogenesis and motility. Involved in respiratory motile cilia function through the regulation of beating asymmetry. Essential for sperm flagella biogenesis, motility and male fertility. Involved in KLF4 glutamylation which impedes its ubiquitination, thereby leading to somatic cell reprogramming, pluripotency maintenance and embryogenesis. The polypeptide is Polyglutamylase complex subunit TTLL1 (Ttll1) (Rattus norvegicus (Rat)).